The sequence spans 1284 residues: Peroxisomal ATPase PEX1 (1284 aa).

The disordered stretch occupies residues 339 to 373 (SPKQQQDKSKQGVLLPDKEKQLSKSPDHKQISSNR). Residues 343 to 373 (QQDKSKQGVLLPDKEKQLSKSPDHKQISSNR) are compositionally biased toward basic and acidic residues. Residues 600–607 (GGKGSGKS) and 882–889 (GPPGTGKT) each bind ATP. Phosphoserine is present on residues Ser1182, Ser1210, and Ser1212. The disordered stretch occupies residues 1261–1284 (FQNPKKRKNQSGTVFRTGQKVTLA). The span at 1270-1284 (QSGTVFRTGQKVTLA) shows a compositional bias: polar residues.

The protein belongs to the AAA ATPase family. In terms of assembly, homooligomer; homooligomerizes in the cytosol, interaction with PEX6 promotes dissociation of the homooligomer. Interacts with PEX6; forming the PEX1-PEX6 AAA ATPase complex, which is composed of a heterohexamer formed by a trimer of PEX1-PEX6 dimers. Interacts indirectly with PEX26, via its interaction with PEX6.

Its subcellular location is the cytoplasm. The protein resides in the cytosol. It is found in the peroxisome membrane. The catalysed reaction is ATP + H2O = ADP + phosphate + H(+). Component of the PEX1-PEX6 AAA ATPase complex, a protein dislocase complex that mediates the ATP-dependent extraction of the PEX5 receptor from peroxisomal membranes, an essential step for PEX5 recycling. Specifically recognizes PEX5 monoubiquitinated at 'Cys-11', and pulls it out of the peroxisome lumen through the PEX2-PEX10-PEX12 retrotranslocation channel. Extraction by the PEX1-PEX6 AAA ATPase complex is accompanied by unfolding of the TPR repeats and release of bound cargo from PEX5. The polypeptide is Peroxisomal ATPase PEX1 (Mus musculus (Mouse)).